The chain runs to 321 residues: Opticin (321 aa).

Residues 1–19 (MKLLALLSLLILMLQEART) form the signal peptide. Tyr61 carries the post-translational modification Sulfotyrosine. Positions 105–142 (LLAAPANHGLPTCLICVCLGSSVYCDDADLENIPPLPQ) constitute an LRRNT domain. LRR repeat units lie at residues 143-164 (TTAY…DFKG), 167-188 (KLKR…ALRL), 191-212 (ALRD…PTSI), 237-258 (KLQF…LPLS), 259-279 (LRSL…AFCD), and 289-309 (PLED…PSAY). A disulfide bond links Cys278 and Cys311. The N-linked (GlcNAc...) asparagine glycan is linked to Asn301.

It belongs to the small leucine-rich proteoglycan (SLRP) family. SLRP class III subfamily. Homodimer. O-glycosylated (sialylated oligosaccharides). Post-translationally, sulfated on tyrosine residues. In terms of processing, proteolytically cleaved by MMP1, MMP2, MMP3, MMP7, MMP8, MMP9, ADAMTS4, and ADAMTS5. Proteolytically cleaved by MMP13.

It localises to the secreted. It is found in the extracellular space. The protein resides in the extracellular matrix. Inhibits angiogenesis in the vitreous humor of the eye, and therefore represses neovascularization. Binds collagen fibrils. May be involved in collagen fiber organization via regulation of other members of the small leucine-rich repeat proteoglycan superfamily. The chain is Opticin (OPTC) from Bos taurus (Bovine).